The sequence spans 361 residues: Adenosine kinase (361 aa).

The Nuclear localization signal motif lies at 7 to 15 (PKPKKLKVE). Residue Asp34 participates in adenosine binding. Ser48 serves as a coordination point for Mg(2+). Phosphotyrosine is present on Tyr76. Mg(2+) contacts are provided by Asp146 and Asn147. Gln305 is a binding site for adenosine. Residue Asp316 is part of the active site. Asp316 functions as the Proton acceptor in the catalytic mechanism.

It belongs to the carbohydrate kinase PfkB family. In terms of assembly, monomer. The cofactor is Mg(2+). Post-translationally, the N-terminus is blocked.

Its subcellular location is the nucleus. It catalyses the reaction adenosine + ATP = AMP + ADP + H(+). It functions in the pathway purine metabolism; AMP biosynthesis via salvage pathway; AMP from adenosine: step 1/1. Activity is inhibited by 5-iodotubercidin and 5'-amino-5'-deoxyadenosine. Functionally, catalyzes the phosphorylation of the purine nucleoside adenosine at the 5' position in an ATP-dependent manner. Serves as a potential regulator of concentrations of extracellular adenosine and intracellular adenine nucleotides. The polypeptide is Adenosine kinase (ADK) (Cricetulus griseus (Chinese hamster)).